The chain runs to 396 residues: Alanine racemase (396 aa).

K46 functions as the Proton acceptor; specific for D-alanine in the catalytic mechanism. At K46 the chain carries N6-(pyridoxal phosphate)lysine. R145 serves as a coordination point for substrate. The active-site Proton acceptor; specific for L-alanine is Y280. A substrate-binding site is contributed by M328.

This sequence belongs to the alanine racemase family. It depends on pyridoxal 5'-phosphate as a cofactor.

It catalyses the reaction L-alanine = D-alanine. Its pathway is amino-acid biosynthesis; D-alanine biosynthesis; D-alanine from L-alanine: step 1/1. Catalyzes the interconversion of L-alanine and D-alanine. May also act on other amino acids. The sequence is that of Alanine racemase (alr) from Brucella suis (strain ATCC 23445 / NCTC 10510).